The primary structure comprises 157 residues: Small ribosomal subunit protein uS7 (157 aa).

It belongs to the universal ribosomal protein uS7 family. Part of the 30S ribosomal subunit. Contacts proteins S9 and S11.

In terms of biological role, one of the primary rRNA binding proteins, it binds directly to 16S rRNA where it nucleates assembly of the head domain of the 30S subunit. Is located at the subunit interface close to the decoding center, probably blocks exit of the E-site tRNA. This is Small ribosomal subunit protein uS7 from Caldicellulosiruptor saccharolyticus (strain ATCC 43494 / DSM 8903 / Tp8T 6331).